A 274-amino-acid chain; its full sequence is UPF0173 metal-dependent hydrolase Adeh_1068 (274 aa).

The protein belongs to the UPF0173 family.

The chain is UPF0173 metal-dependent hydrolase Adeh_1068 from Anaeromyxobacter dehalogenans (strain 2CP-C).